The following is a 333-amino-acid chain: Phosphate acetyltransferase (333 aa).

The protein belongs to the phosphate acetyltransferase and butyryltransferase family. Homodimer.

It localises to the cell membrane. The enzyme catalyses acetyl-CoA + phosphate = acetyl phosphate + CoA. The protein operates within metabolic intermediate biosynthesis; acetyl-CoA biosynthesis; acetyl-CoA from acetate: step 2/2. The polypeptide is Phosphate acetyltransferase (pta) (Methanosarcina thermophila).